Consider the following 769-residue polypeptide: Trehalose 6-phosphate phosphorylase (769 aa).

342-343 contributes to the substrate binding site; the sequence is WD. Glu-480 functions as the Proton donor in the catalytic mechanism. 589-590 is a binding site for substrate; the sequence is KQ.

Belongs to the glycosyl hydrolase 65 family. In terms of assembly, monomer.

It carries out the reaction alpha,alpha-trehalose 6-phosphate + phosphate = beta-D-glucose 1-phosphate + D-glucose 6-phosphate. Functionally, catalyzes the conversion of trehalose 6-phosphate into glucose 1-phosphate and glucose 6-phosphate. The protein is Trehalose 6-phosphate phosphorylase (trePP) of Lactococcus lactis subsp. lactis (strain IL1403) (Streptococcus lactis).